The primary structure comprises 291 residues: Protein pxr1 (291 aa).

Residues 1-11 (MGLAAPRKRTK) are compositionally biased toward basic residues. 2 disordered regions span residues 1–26 (MGLA…RSTD) and 146–268 (LVPP…FRGR). Polar residues-rich tracts occupy residues 15–25 (DPNNTTWSRST) and 146–156 (LVPPTSQNGQA). The G-patch domain maps to 25–79 (TDGFGHRILKAQGWTPGSFLGPRNAAHSDLFTTASASHIRVVLKDDNLGLGARPK). Residues 194–205 (ETNSRGSREKER) show a composition bias toward basic and acidic residues. Residues 206-219 (KREKRQMRRDKKRK) are compositionally biased toward basic residues. Over residues 230–247 (MQEKTRVQGPSEDVKPTE) the composition is skewed to basic and acidic residues.

Belongs to the PINX1 family.

It localises to the nucleus. The protein localises to the nucleolus. In terms of biological role, involved in rRNA-processing at A0, A1 and A2 sites and negatively regulates telomerase. This Aspergillus clavatus (strain ATCC 1007 / CBS 513.65 / DSM 816 / NCTC 3887 / NRRL 1 / QM 1276 / 107) protein is Protein pxr1 (pxr1).